The sequence spans 606 residues: V-type proton ATPase catalytic subunit A (606 aa).

Alanine 2 carries the post-translational modification N-acetylalanine. Position 240 to 247 (240 to 247) interacts with ATP; that stretch reads AFGCGKTV.

Belongs to the ATPase alpha/beta chains family. As to quaternary structure, V-ATPase is a heteromultimeric enzyme made up of two complexes: the ATP-hydrolytic V1 complex and the proton translocation V0 complex. The V1 complex consists of three catalytic AB heterodimers that form a heterohexamer, three peripheral stalks each consisting of EG heterodimers, one central rotor including subunits D and F, and the regulatory subunits C and H. The proton translocation complex V0 consists of the proton transport subunit a, a ring of proteolipid subunits c9c'', rotary subunit d, subunits e and f, and the accessory subunits vah-19/Ac45 and vah-20/PRR. Expressed in proximal but not distal germ cells.

It carries out the reaction ATP + H2O + 4 H(+)(in) = ADP + phosphate + 5 H(+)(out). With respect to regulation, ATP hydrolysis occurs at the interface between the nucleotide-binding domains of subunits A and B. ATP hydrolysis triggers a conformational change in the subunits D and F, which induces a shift of subunit d. The c-ring is subsequently rotated and results in a continuous proton translocation across the membrane. In terms of biological role, catalytic subunit of the V1 complex of vacuolar(H+)-ATPase (V-ATPase), a multisubunit enzyme composed of a peripheral complex (V1) that hydrolyzes ATP and a membrane integral complex (V0) that translocates protons. V-ATPase is responsible for acidifying and maintaining the pH of intracellular compartments and in some cell types, is targeted to the plasma membrane, where it is responsible for acidifying the extracellular environment. Required along with other vacuolar ATPase components for the removal of protein aggregates which form in immature oocytes in the distal gonad. This removal occurs as the oocytes mature and move to the proximal gonad, is triggered by the introduction of sperm through mating and occurs before fertilization. The introduction of sperm triggers V-ATPase accumulation in proximal oocytes and induces lysosomal acidification which leads to engulfing of protein aggregates by lysosomes and subsequent clearance of the aggregates. Lysosomal acidification also leads to changes in mitochondrial morphology and function. Mitochondria in distal immature oocytes are fragmented, produce high levels of reactive oxygen species (ROS) and have high membrane potential, indicative of metabolic inactivity. In contrast, mitochondria in proximal mature oocytes are tubular with lower ROS levels and membrane potential, indicative of an active metabolic state required for aggregate mobilization before clearance. Involved in receptor-mediated endocytosis. The protein is V-type proton ATPase catalytic subunit A of Caenorhabditis elegans.